A 116-amino-acid polypeptide reads, in one-letter code: Phosphoribosyl-AMP cyclohydrolase (116 aa).

Asp81 contributes to the Mg(2+) binding site. A Zn(2+)-binding site is contributed by Cys82. Asp83 and Asp85 together coordinate Mg(2+). Zn(2+)-binding residues include Cys98 and Cys105.

This sequence belongs to the PRA-CH family. In terms of assembly, homodimer. It depends on Mg(2+) as a cofactor. Requires Zn(2+) as cofactor.

The protein resides in the cytoplasm. It catalyses the reaction 1-(5-phospho-beta-D-ribosyl)-5'-AMP + H2O = 1-(5-phospho-beta-D-ribosyl)-5-[(5-phospho-beta-D-ribosylamino)methylideneamino]imidazole-4-carboxamide. The protein operates within amino-acid biosynthesis; L-histidine biosynthesis; L-histidine from 5-phospho-alpha-D-ribose 1-diphosphate: step 3/9. In terms of biological role, catalyzes the hydrolysis of the adenine ring of phosphoribosyl-AMP. This is Phosphoribosyl-AMP cyclohydrolase from Mycolicibacterium vanbaalenii (strain DSM 7251 / JCM 13017 / BCRC 16820 / KCTC 9966 / NRRL B-24157 / PYR-1) (Mycobacterium vanbaalenii).